Reading from the N-terminus, the 576-residue chain is MTKRIVVDPITRIEGHLRIEVVVDENNVIQDAFSTATLWRGLETILKGRDPRDAGFFTQRICGVCTYSHYKAGISAVENALGIKPPLNAELIRSLMSISLILHDHTVHFYHLHGLDWCDITSALKADPVAASKLAFKYSPNPIATGADELTAVQKRVAEFAAKGNLGPFANAYWGHKTYRFSPEQNLIVLSHYLKALEVQRVAAQMMAIWGAKQPHPQSLTVGGVTSVMDALDPSRLGDWLTKYKYVADFVNRAYYADVVMAAEVFKSEPSVLGGCNVKNFYSYQEIPLNKTEWMYSTGIVMDGDITKVHEINEDLITEEATHAWYKENKALHPYDGQQDPNYTGFKDMETVGPDGTMVKTKVIDEKGKYTWIKAPRYGGKPLEVGPLATIVVGLAAKNPRIEKVATQFLKDTGLPLAALFTTLGRTAARMLECKLSADYGFEAFNSLIANLKVDQSTYTTYKIDKNKEYKGRYMGTVPRGVLSHWVRIKNGVIQNYQAVVPSTWNAGPRDANGTKGPYEASLVGMKLQDLSQPLEIIRVIHSFDPCIACAVHVMDTKGNELSQYRVDPITVGCNL.

Residues C62, C65, C547, and C550 each coordinate Ni(2+).

It belongs to the [NiFe]/[NiFeSe] hydrogenase large subunit family. Heterodimer of a large and a small subunit. Requires Ni(2+) as cofactor.

It is found in the cell membrane. It carries out the reaction H2 + a menaquinone = a menaquinol. Its function is as follows. This enzyme recycles the H(2) produced by nitrogenase to increase the production of ATP and to protect nitrogenase against inhibition or damage by O(2) under carbon- or phosphate-limited conditions. This Wolinella succinogenes (strain ATCC 29543 / DSM 1740 / CCUG 13145 / JCM 31913 / LMG 7466 / NCTC 11488 / FDC 602W) (Vibrio succinogenes) protein is Quinone-reactive Ni/Fe-hydrogenase large chain (hydB).